The following is a 240-amino-acid chain: Transcription factor bHLH47 (240 aa).

Polar residues predominate over residues 1 to 13 (MVSKTPSTSSDEA). The interval 1–26 (MVSKTPSTSSDEANATADERCRKGKV) is disordered. Positions 27–77 (PKRINKAVRERLKREHLNELFIELADTLELNQQNSGKASILCEATRFLKDV) constitute a bHLH domain. Residues 98–131 (VTTEKNELKEETSVLETEISKLQNEIEARANQSK) adopt a coiled-coil conformation. The segment covering 128 to 138 (NQSKPDLNTSP) has biased composition (polar residues). Residues 128–153 (NQSKPDLNTSPAPEYHHHHYQQQHPE) are disordered.

As to quaternary structure, homodimer. Forms heterodimer with PYEL proteins bHLH115, bHLH104 and ILR3. In terms of tissue distribution, expressed constitutively in roots, leaves, stems, and flowers.

Its subcellular location is the nucleus. The polypeptide is Transcription factor bHLH47 (BHLH47) (Arabidopsis thaliana (Mouse-ear cress)).